The primary structure comprises 397 residues: Lymphoid enhancer-binding factor 1 (397 aa).

The tract at residues Met1–Glu60 is CTNNB1-binding. Residue Lys25 forms a Glycyl lysine isopeptide (Lys-Gly) (interchain with G-Cter in SUMO) linkage. The tract at residues Ser59 to Lys102 is disordered. A compositionally biased stretch (basic and acidic residues) spans Pro80–Asp96. The residue at position 130 (Ser130) is a Phosphoserine. Thr153 bears the Phosphothreonine; by NLK mark. Residue Ser164 is modified to Phosphoserine; by NLK. Disordered regions lie at residues Ser164 to Ile191 and Val266 to His296. A Glycyl lysine isopeptide (Lys-Gly) (interchain with G-Cter in SUMO) cross-link involves residue Lys267. The segment covering Lys267–Arg294 has biased composition (basic and acidic residues). A DNA-binding region (HMG box) is located at residues Ile297 to Ser365. The interval Arg367 to Ile397 is disordered.

Belongs to the TCF/LEF family. In terms of assembly, binds the armadillo repeat of CTNNB1 and forms a stable complex. Binds TLE1, ALYREF/THOC4, MDFI and MDFIC. Interacts with NLK. Interacts with EP300 and PIASG. Interacts with DAZAP2. Phosphorylated at Thr-153 and/or Ser-164 by NLK. Phosphorylation by NLK at these sites represses LEF1-mediated transcriptional activation of target genes of the canonical Wnt signaling pathway. As to expression, expressed in Vgamma1.1 and Vgamma2 gamma-delta T-cells, however not expressed in gamma-delta thymocytes fated for Il17a expression (at protein level). Expressed in alpha-beta T-cell lineages. Expressed in the thymus. Found in distinct epithelial cell compartments of the skin and is abundant in the hair-producing progenitors of the follicle.

Its subcellular location is the nucleus. Its function is as follows. Transcription factor that binds DNA in a sequence-specific manner. Participates in the Wnt signaling pathway. Activates transcription of target genes in the presence of CTNNB1 and EP300. PIASG antagonizes both Wnt-dependent and Wnt-independent activation by LEF1. TLE1, TLE2, TLE3 and TLE4 repress transactivation mediated by LEF1 and CTNNB1. Regulates T-cell receptor alpha enhancer function. Required for IL17A expressing gamma-delta T-cell maturation and development, via binding to regulator loci of BLK to modulate expression. Acts as a positive regulator of odontoblast differentiation during mesenchymal tooth germ formation, expression is repressed during the bell stage by MSX1-mediated inhibition of CTNNB1 signaling. May play a role in hair cell differentiation and follicle morphogenesis. The polypeptide is Lymphoid enhancer-binding factor 1 (Mus musculus (Mouse)).